A 190-amino-acid polypeptide reads, in one-letter code: Putative acetyltransferase DDB_G0275913 (190 aa).

This sequence belongs to the transferase hexapeptide repeat family.

The sequence is that of Putative acetyltransferase DDB_G0275913 from Dictyostelium discoideum (Social amoeba).